Consider the following 131-residue polypeptide: Small ribosomal subunit protein eS8 (131 aa).

The interval 15 to 36 (PSGGKKGRVRKTKKKALGGGPP) is disordered. Over residues 17–30 (GGKKGRVRKTKKKA) the composition is skewed to basic residues.

The protein belongs to the eukaryotic ribosomal protein eS8 family. Part of the 30S ribosomal subunit.

In Pyrobaculum calidifontis (strain DSM 21063 / JCM 11548 / VA1), this protein is Small ribosomal subunit protein eS8.